The primary structure comprises 394 residues: Cysteine protease ATG4B (394 aa).

Residue Cys-74 is the Nucleophile of the active site. Residues Asp-280 and His-282 contribute to the active site. Positions Phe-389–Leu-392 match the LIR motif.

This sequence belongs to the peptidase C54 family.

It localises to the cytoplasm. The protein resides in the cytosol. It is found in the cytoplasmic vesicle. Its subcellular location is the autophagosome. The protein localises to the endoplasmic reticulum. It localises to the mitochondrion. The enzyme catalyses [protein]-C-terminal L-amino acid-glycyl-phosphatidylethanolamide + H2O = [protein]-C-terminal L-amino acid-glycine + a 1,2-diacyl-sn-glycero-3-phosphoethanolamine. The catalysed reaction is [protein]-C-terminal L-amino acid-glycyl-phosphatidylserine + H2O = [protein]-C-terminal L-amino acid-glycine + a 1,2-diacyl-sn-glycero-3-phospho-L-serine. Functionally, cysteine protease that plays a key role in autophagy by mediating both proteolytic activation and delipidation of ATG8 family proteins. Required for canonical autophagy (macroautophagy), non-canonical autophagy as well as for mitophagy. The protease activity is required for proteolytic activation of ATG8 family proteins: cleaves the C-terminal amino acid of ATG8 proteins to reveal a C-terminal glycine. Exposure of the glycine at the C-terminus is essential for ATG8 proteins conjugation to phosphatidylethanolamine (PE) and insertion to membranes, which is necessary for autophagy. Protease activity is also required to counteract formation of high-molecular weight conjugates of ATG8 proteins (ATG8ylation): acts as a deubiquitinating-like enzyme that removes ATG8 conjugated to other proteins, such as ATG3. In addition to the protease activity, also mediates delipidation of ATG8 family proteins. Catalyzes delipidation of PE-conjugated forms of ATG8 proteins during macroautophagy. Also involved in non-canonical autophagy, a parallel pathway involving conjugation of ATG8 proteins to single membranes at endolysosomal compartments, by catalyzing delipidation of ATG8 proteins conjugated to phosphatidylserine (PS). The polypeptide is Cysteine protease ATG4B (Danio rerio (Zebrafish)).